Reading from the N-terminus, the 494-residue chain is MVLTKTATNDESVCTMFGSRYVRTTLPKYEIGENSIPKDAAYQIIKDELMLDGNPRLNLASFVTTWMEPECDKLIMDSINKNYVDMDEYPVTTELQNRCVNIIARLFNAPLEESETAVGVGTVGSSEAIMLAGLAFKRKWQNKRKAEGKPYDKPNIVTGANVQVCWEKFARYFEVELKEVNLSEGYYVMDPDKAAEMVDENTICVAAILGSTLNGEFEDVKRLNDLLVKKNEETGWNTPIHVDAASGGFIAPFIYPELEWDFRLPLVKSINVSGHKYGLVYAGIGWVVWRAAEDLPEELIFHINYLGADQPTFTLNFSKGSSQIIAQYYQLIRLGFEGYKNVMENCIENMVVLKEGIEKTERFNIVSKDQGVPVVAFSLKDHSFHNEFEISEMLRRFGWIVPAYTMPADAQHITVLRVVIREDFSRTLAERLVADISKVLHELDTLPSKISKKMGIEGIAENVKEKKMEKEILMEVIVGWRKFVKERKKMNGVC.

The residue at position 276 (lysine 276) is an N6-(pyridoxal phosphate)lysine. Residues 463–494 (VKEKKMEKEILMEVIVGWRKFVKERKKMNGVC) form a calmodulin-binding region.

The protein belongs to the group II decarboxylase family. As to quaternary structure, homohexamer. Interacts with calmodulin. Pyridoxal 5'-phosphate serves as cofactor. Expressed in roots, inflorescence stems, flowers, siliques and leaves.

It catalyses the reaction L-glutamate + H(+) = 4-aminobutanoate + CO2. Up-regulated by calmodulin binding at physiological pH. Functionally, catalyzes the conversion of glutamate to 4-aminobutanoate (GABA). The calmodulin-binding is calcium-dependent and it is proposed to directly or indirectly form a calcium regulated control of GABA biosynthesis. This is Glutamate decarboxylase 2 (GAD2) from Arabidopsis thaliana (Mouse-ear cress).